The primary structure comprises 189 residues: Large ribosomal subunit protein bL9 (189 aa).

The protein belongs to the bacterial ribosomal protein bL9 family.

Its function is as follows. Binds to the 23S rRNA. The chain is Large ribosomal subunit protein bL9 from Cereibacter sphaeroides (strain ATCC 17025 / ATH 2.4.3) (Rhodobacter sphaeroides).